A 454-amino-acid chain; its full sequence is Inner membrane transport protein YajR (454 aa).

Over 1-14 (MNDYKMTPGERRAT) the chain is Periplasmic. A helical membrane pass occupies residues 15-35 (WGLGTVFSLRMLGMFMVLPVL). At 36 to 47 (TTYGMALQGASE) the chain is on the cytoplasmic side. The helical transmembrane segment at 48-68 (ALIGIAIGIYGLTQAVFQIPF) threads the bilayer. Residues 69–84 (GLLSDRIGRKPLIVGG) are Periplasmic-facing. Residues 85–105 (LAVFAAGSVIAALSDSIWGII) traverse the membrane as a helical segment. Residues 106-137 (LGRALQGSGAIAAAVMALLSDLTREQNRTKAM) are Cytoplasmic-facing. The helical transmembrane segment at 138–158 (AFIGVSFGITFAIAMVLGPII) threads the bilayer. Residues 159 to 165 (THKLGLH) lie on the Periplasmic side of the membrane. A helical membrane pass occupies residues 166 to 186 (ALFWMIAILATTGIALTIWVV). At 187-216 (PNSSTHVLNRESGMVKGSFSKVLAEPRLLK) the chain is on the cytoplasmic side. A helical membrane pass occupies residues 217–237 (LNFGIMCLHILLMSTFVALPG). At 238–252 (QLADAGFPAAEHWKV) the chain is on the periplasmic side. A helical transmembrane segment spans residues 253–273 (YLATMLIAFGSVVPFIIYAEV). At 274 to 279 (KRKMKQ) the chain is on the cytoplasmic side. The helical transmembrane segment at 280–300 (VFVFCVGLIVVAEIVLWNAQT) threads the bilayer. The Periplasmic segment spans residues 301 to 306 (QFWQLV). A helical membrane pass occupies residues 307 to 327 (VGVQLFFVAFNLMEALLPSLI). At 328–340 (SKESPAGYKGTAM) the chain is on the cytoplasmic side. A helical transmembrane segment spans residues 341–361 (GVYSTSQFLGVAIGGSLGGWI). At 362 to 363 (NG) the chain is on the periplasmic side. The chain crosses the membrane as a helical span at residues 364-384 (MFDGQGVFLAGAMLAAVWLTV). Residues 385–454 (ASTMKEPPYV…FEIEQAIRQA (70 aa)) lie on the Cytoplasmic side of the membrane.

Belongs to the major facilitator superfamily.

The protein localises to the cell inner membrane. The sequence is that of Inner membrane transport protein YajR (yajR) from Escherichia coli (strain K12).